Consider the following 253-residue polypeptide: Glutamate racemase (253 aa).

Substrate contacts are provided by residues 7–8 and 39–40; these read DS and YG. The active-site Proton donor/acceptor is Cys70. A substrate-binding site is contributed by 71 to 72; that stretch reads NS. The active-site Proton donor/acceptor is Cys179. Substrate is bound at residue 180–181; sequence TH.

Belongs to the aspartate/glutamate racemases family.

The enzyme catalyses L-glutamate = D-glutamate. Its pathway is cell wall biogenesis; peptidoglycan biosynthesis. In terms of biological role, provides the (R)-glutamate required for cell wall biosynthesis. This chain is Glutamate racemase, found in Nitratiruptor sp. (strain SB155-2).